The primary structure comprises 428 residues: Peptidase B (428 aa).

Residues Lys195 and Asp200 each coordinate Mn(2+). Lys207 is an active-site residue. The Mn(2+) site is built by Asp218, Asp277, and Glu279. Arg281 is an active-site residue.

The protein belongs to the peptidase M17 family. As to quaternary structure, homohexamer. Mn(2+) is required as a cofactor.

The protein resides in the cytoplasm. The catalysed reaction is Release of an N-terminal amino acid, Xaa, from a peptide or arylamide. Xaa is preferably Glu or Asp but may be other amino acids, including Leu, Met, His, Cys and Gln.. Its function is as follows. Probably plays an important role in intracellular peptide degradation. This chain is Peptidase B, found in Klebsiella pneumoniae subsp. pneumoniae (strain ATCC 700721 / MGH 78578).